Here is a 107-residue protein sequence, read N- to C-terminus: Nucleoid-associated protein GDI3467/Gdia_2910 (107 aa).

The protein belongs to the YbaB/EbfC family. Homodimer.

It localises to the cytoplasm. It is found in the nucleoid. Its function is as follows. Binds to DNA and alters its conformation. May be involved in regulation of gene expression, nucleoid organization and DNA protection. The sequence is that of Nucleoid-associated protein GDI3467/Gdia_2910 from Gluconacetobacter diazotrophicus (strain ATCC 49037 / DSM 5601 / CCUG 37298 / CIP 103539 / LMG 7603 / PAl5).